Reading from the N-terminus, the 173-residue chain is Inorganic pyrophosphatase (173 aa).

Substrate is bound by residues Lys-29, Arg-43, and Tyr-55. Residues Asp-65, Asp-70, and Asp-102 each coordinate Mg(2+). Tyr-141 contributes to the substrate binding site.

This sequence belongs to the PPase family. As to quaternary structure, homohexamer. Mg(2+) is required as a cofactor.

The protein localises to the cytoplasm. It catalyses the reaction diphosphate + H2O = 2 phosphate + H(+). Catalyzes the hydrolysis of inorganic pyrophosphate (PPi) forming two phosphate ions. The polypeptide is Inorganic pyrophosphatase (Rickettsia felis (strain ATCC VR-1525 / URRWXCal2) (Rickettsia azadi)).